The following is a 239-amino-acid chain: uncharacterized protein (239 aa).

Positions 1–65 constitute an S4 RNA-binding domain; the sequence is MRLDKLLANS…DYREFIYLMM (65 aa). D103 acts as the Nucleophile in catalysis.

It belongs to the pseudouridine synthase RsuA family.

The enzyme catalyses a uridine in RNA = a pseudouridine in RNA. This is an uncharacterized protein from Bacillus subtilis (strain 168).